The primary structure comprises 335 residues: tRNA (guanine(6)-N2)-methyltransferase (335 aa).

A THUMP domain is found at 47 to 150 (EALGLRLAHH…GEEAFLGVQL (104 aa)). Residues 195 to 197 (SGT), 243 to 244 (DA), and asparagine 260 contribute to the S-adenosyl-L-methionine site.

The protein belongs to the methyltransferase superfamily. As to quaternary structure, monomer in solution.

Its subcellular location is the cytoplasm. It catalyses the reaction guanosine(6) in tRNA + S-adenosyl-L-methionine = N(2)-methylguanosine(6) in tRNA + S-adenosyl-L-homocysteine + H(+). In terms of biological role, S-adenosyl-L-methionine-dependent methyltransferase that catalyzes the methylation of the guanosine nucleotide at position 6 (m2G6) in tRNA(Phe). This chain is tRNA (guanine(6)-N2)-methyltransferase, found in Thermus thermophilus (strain ATCC BAA-163 / DSM 7039 / HB27).